The primary structure comprises 690 residues: Glycine--tRNA ligase beta subunit (690 aa).

Belongs to the class-II aminoacyl-tRNA synthetase family. In terms of assembly, tetramer of two alpha and two beta subunits.

It is found in the cytoplasm. The catalysed reaction is tRNA(Gly) + glycine + ATP = glycyl-tRNA(Gly) + AMP + diphosphate. This chain is Glycine--tRNA ligase beta subunit, found in Desulfatibacillum aliphaticivorans.